The primary structure comprises 198 residues: Dephospho-CoA kinase (198 aa).

Residues 2–90 enclose the DPCK domain; sequence LIAIVGKPGV…KLSLVTKPLL (89 aa). 10-15 contacts ATP; it reads GVGKTS.

The protein belongs to the CoaE family.

It is found in the cytoplasm. The enzyme catalyses 3'-dephospho-CoA + ATP = ADP + CoA + H(+). It functions in the pathway cofactor biosynthesis; coenzyme A biosynthesis; CoA from (R)-pantothenate: step 5/5. In terms of biological role, catalyzes the phosphorylation of the 3'-hydroxyl group of dephosphocoenzyme A to form coenzyme A. The polypeptide is Dephospho-CoA kinase (Mycoplasma genitalium (strain ATCC 33530 / DSM 19775 / NCTC 10195 / G37) (Mycoplasmoides genitalium)).